Consider the following 172-residue polypeptide: Large ribosomal subunit protein uL16 (172 aa).

The protein belongs to the universal ribosomal protein uL16 family.

The chain is Large ribosomal subunit protein uL16 from Methanocella arvoryzae (strain DSM 22066 / NBRC 105507 / MRE50).